Reading from the N-terminus, the 222-residue chain is Pro-opiomelanocortin (222 aa).

A signal peptide spans 1-18; that stretch reads MCPVWLLVAVVVVGGSRG. Residues 19–90 constitute a propeptide that is removed on maturation; it reads AVSQCWEHPS…SSSSSSSPQS (72 aa). 2 disordered regions span residues 56-98 and 148-170; these read IPGN…SMEH and EEEK…LQEK. A compositionally biased stretch (low complexity) spans 70–93; the sequence is PSSSSSFILPSSSSSSSSPQSKRS. A compositionally biased stretch (acidic residues) spans 148-162; it reads EEEKAQEVMAEEEEE.

Belongs to the POMC family. In terms of processing, specific enzymatic cleavages at paired basic residues yield the different active peptides.

Its subcellular location is the secreted. In terms of biological role, stimulates the adrenal glands to release cortisol. Anorexigenic peptide. Increases the pigmentation of skin by increasing melanin production in melanocytes. Its function is as follows. Increases the pigmentation of skin by increasing melanin production in melanocytes. Functionally, endogenous orexigenic opiate. In terms of biological role, endogenous opiate. This is Pro-opiomelanocortin (pomc) from Thunnus obesus (Bigeye tuna).